The sequence spans 334 residues: NH(3)-dependent NAD(+) synthetase (334 aa).

Residue 47 to 54 (GLSGGIDS) coordinates ATP. Position 53 (Asp-53) interacts with Mg(2+). Arg-183 contacts deamido-NAD(+). Position 203 (Thr-203) interacts with ATP. Residue Glu-208 coordinates Mg(2+). Residues Lys-216 and Asp-223 each contribute to the deamido-NAD(+) site. Residues Lys-232 and Thr-254 each coordinate ATP.

It belongs to the NAD synthetase family. In terms of assembly, homodimer.

It carries out the reaction deamido-NAD(+) + NH4(+) + ATP = AMP + diphosphate + NAD(+) + H(+). It functions in the pathway cofactor biosynthesis; NAD(+) biosynthesis; NAD(+) from deamido-NAD(+) (ammonia route): step 1/1. Functionally, catalyzes the ATP-dependent amidation of deamido-NAD to form NAD. Uses ammonia as a nitrogen source. In Rhizobium meliloti (strain 1021) (Ensifer meliloti), this protein is NH(3)-dependent NAD(+) synthetase.